The primary structure comprises 142 residues: Large ribosomal subunit protein uL13 (142 aa).

Belongs to the universal ribosomal protein uL13 family. As to quaternary structure, part of the 50S ribosomal subunit.

Functionally, this protein is one of the early assembly proteins of the 50S ribosomal subunit, although it is not seen to bind rRNA by itself. It is important during the early stages of 50S assembly. In Ruthia magnifica subsp. Calyptogena magnifica, this protein is Large ribosomal subunit protein uL13.